The primary structure comprises 335 residues: Mitochondrial thiamine diphosphate carrier 1 (335 aa).

Helical transmembrane passes span 13–29 (KRAV…GAIS), 88–105 (VPAL…FAVL), 127–150 (YLSY…FDLL), 182–199 (LYAG…YAGL), 231–247 (SLSS…SGTV), and 304–323 (GIVP…FVAY). Solcar repeat units lie at residues 13-111 (KRAV…VKSF), 124-210 (LSPY…FKRW), and 232-329 (LSSF…ASDW).

This sequence belongs to the mitochondrial carrier (TC 2.A.29) family.

It is found in the mitochondrion inner membrane. Mitochondrial transporter that mediates uptake of thiamine diphosphate (ThDP) into mitochondria. This is Mitochondrial thiamine diphosphate carrier 1 from Arabidopsis thaliana (Mouse-ear cress).